The primary structure comprises 206 residues: Synaptosomal-associated protein 25 (206 aa).

Residues 1–20 are compositionally biased toward basic and acidic residues; that stretch reads MAEDADMRNELEEMQRRADQ. Residues 1-25 form a disordered region; that stretch reads MAEDADMRNELEEMQRRADQLADES. The interval 1–75 is interaction with CENPF; it reads MAEDADMRNE…QINKDMKEAE (75 aa). One can recognise a t-SNARE coiled-coil homology 1 domain in the interval 19–81; the sequence is DQLADESLES…KEAEKNSTDL (63 aa). 4 S-palmitoyl cysteine lipidation sites follow: cysteine 85, cysteine 88, cysteine 90, and cysteine 92. The interaction with ZDHHC17 stretch occupies residues 111–120; sequence GVVASQPARV. Threonine 138 is subject to Phosphothreonine. Residues 140–202 enclose the t-SNARE coiled-coil homology 2 domain; sequence DARENEMDEN…DEANQRATKM (63 aa). Residues serine 154 and serine 187 each carry the phosphoserine modification.

It belongs to the SNAP-25 family. As to quaternary structure, part of the SNARE core complex containing SNAP25, VAMP2 and STX1A; this complex binds CPLX1. Found in a complex containing SYT1, SV2B and syntaxin-1. Found in a ternary complex with STX1A and VAMP8. Interacts with HSC70 and with SYT9, forming a complex with DNAJC5. The interaction with SYT9 is inhibited in presence of calcium. Isoform 1 and isoform 2 interact with BLOC1S6. Interacts with CENPF. Interacts with EQTN. Interacts with HGS. Interacts with KCNB1 (via N-terminus); reduces the voltage-dependent potassium channel KCNB1 activity in pancreatic beta cells. Interacts with OTOF. Interacts with RIMS1. Interacts with SNAPIN. Interacts with STXBP6. Interacts with TRIM9. Interacts with ZDHHC13 (via ANK repeats). Interacts with ZDHHC17 (via ANK repeats). Associates with the BLOC-1 complex. Interacts with PLCL1 (via C2 domain). Interacts with PRRT2; this interaction may impair the formation of the SNARE complex. Interacts with alpha-synuclein/SNCA. Interacts with PRPH2. Interacts with ROM1. Interacts with STX3. Post-translationally, palmitoylated. Cys-85 appears to be the main site, and palmitoylation is required for membrane association.

Its subcellular location is the cytoplasm. It is found in the perinuclear region. The protein localises to the cell membrane. The protein resides in the synapse. It localises to the synaptosome. Its subcellular location is the photoreceptor inner segment. T-SNARE involved in the molecular regulation of neurotransmitter release. May play an important role in the synaptic function of specific neuronal systems. Associates with proteins involved in vesicle docking and membrane fusion. Regulates plasma membrane recycling through its interaction with CENPF. Modulates the gating characteristics of the delayed rectifier voltage-dependent potassium channel KCNB1 in pancreatic beta cells. The polypeptide is Synaptosomal-associated protein 25 (SNAP25) (Pongo abelii (Sumatran orangutan)).